We begin with the raw amino-acid sequence, 65 residues long: Protein translocase subunit SecE (65 aa).

At 1 to 34 the chain is on the cytoplasmic side; that stretch reads MEKLRKFFREVIAEAKKISWPSRKELLTSFGVVL. Residues 35–51 form a helical membrane-spanning segment; the sequence is VILAVTSVYFFVLDFIF. Over 52-65 the chain is Extracellular; it reads SGVVSAIFKALGIG.

It belongs to the SecE/SEC61-gamma family. Component of the Sec protein translocase complex. Heterotrimer consisting of SecY, SecE and SecG subunits. The heterotrimers can form oligomers, although 1 heterotrimer is thought to be able to translocate proteins. Interacts with SecDF, and other proteins may be involved. The channel interacts with SecA via subunit SecY.

It is found in the cell inner membrane. Functionally, essential subunit of the protein translocation channel SecYEG. Clamps together the 2 halves of SecY. May contact the channel plug during translocation. In Thermotoga maritima (strain ATCC 43589 / DSM 3109 / JCM 10099 / NBRC 100826 / MSB8), this protein is Protein translocase subunit SecE.